Reading from the N-terminus, the 518-residue chain is UPF0053 inner membrane protein YoaE (518 aa).

The Cytoplasmic segment spans residues 1 to 13; it reads MEFLMDPSIWAGL. Residues 14-34 traverse the membrane as a helical segment; it reads LTLVVLEIVLGIDNLVFIAIL. At 35–48 the chain is on the periplasmic side; the sequence is ADKLPPKQRDKARL. Residues 49–69 traverse the membrane as a helical segment; sequence LGLSLALIMRLGLLSLISWMV. Over 70-78 the chain is Cytoplasmic; the sequence is TLTKPLFTV. The chain crosses the membrane as a helical span at residues 79 to 99; sequence MDFSFSGRDLIMLFGGIFLLF. At 100–124 the chain is on the periplasmic side; the sequence is KATTELHERLENRDHDSGHGKGYAS. The helical transmembrane segment at 125-145 threads the bilayer; it reads FWVVVTQIVILDAVFSLDAVI. The Cytoplasmic portion of the chain corresponds to 146–149; the sequence is TAVG. A helical membrane pass occupies residues 150-170; that stretch reads MVNHLPVMMAAVVIAMAVMLL. Residues 171–184 lie on the Periplasmic side of the membrane; sequence ASKPLTRFVNQHPT. A helical membrane pass occupies residues 185 to 205; sequence VVVLCLSFLLMIGLSLVAEGF. Residue Gly-206 is a topological domain, cytoplasmic. The helical transmembrane segment at 207 to 227 threads the bilayer; sequence FHIPKGYLYAAIGFSIIIEVF. The Periplasmic portion of the chain corresponds to 228–354; sequence NQIARRNFIR…IGIVRAKELL (127 aa). 2 CBS domains span residues 304–363 and 367–427; these read MTPR…GVDV and ASAS…DADE. Residues 355–375 form a helical membrane-spanning segment; it reads VALEEGVDVAAIASASPAIIV. The Cytoplasmic segment spans residues 376–518; that stretch reads PETLDPINLL…KEQPAHDEDE (143 aa).

The protein belongs to the UPF0053 family.

It localises to the cell inner membrane. This is UPF0053 inner membrane protein YoaE (yoaE) from Escherichia coli O157:H7.